The following is a 427-amino-acid chain: Trigger factor (427 aa).

The PPIase FKBP-type domain occupies 163–248 (GDTVVIDFVG…VNEVKAKELP (86 aa)).

It belongs to the FKBP-type PPIase family. Tig subfamily.

The protein localises to the cytoplasm. The enzyme catalyses [protein]-peptidylproline (omega=180) = [protein]-peptidylproline (omega=0). Functionally, involved in protein export. Acts as a chaperone by maintaining the newly synthesized protein in an open conformation. Functions as a peptidyl-prolyl cis-trans isomerase. The protein is Trigger factor of Lactococcus lactis subsp. cremoris (strain SK11).